Consider the following 376-residue polypeptide: 5-amino-6-(D-ribitylamino)uracil--L-tyrosine 4-hydroxyphenyl transferase 1 (376 aa).

A Radical SAM core domain is found at 50–275 (VTYVVNRNIN…PGLEDLKVYA (226 aa)). Residues Cys64, Cys68, and Cys71 each coordinate [4Fe-4S] cluster.

Belongs to the radical SAM superfamily. CofH family. Consists of two subunits, CofG and CofH. [4Fe-4S] cluster serves as cofactor.

The catalysed reaction is 5-amino-6-(D-ribitylamino)uracil + L-tyrosine + S-adenosyl-L-methionine = 5-amino-5-(4-hydroxybenzyl)-6-(D-ribitylimino)-5,6-dihydrouracil + 2-iminoacetate + 5'-deoxyadenosine + L-methionine + H(+). The protein operates within cofactor biosynthesis; coenzyme F0 biosynthesis. Its function is as follows. Catalyzes the radical-mediated synthesis of 5-amino-5-(4-hydroxybenzyl)-6-(D-ribitylimino)-5,6-dihydrouracil from 5-amino-6-(D-ribitylamino)uracil and L-tyrosine. This chain is 5-amino-6-(D-ribitylamino)uracil--L-tyrosine 4-hydroxyphenyl transferase 1, found in Methanosarcina mazei (strain ATCC BAA-159 / DSM 3647 / Goe1 / Go1 / JCM 11833 / OCM 88) (Methanosarcina frisia).